Consider the following 79-residue polypeptide: UPF0154 protein SAK_1616 (79 aa).

A helical transmembrane segment spans residues 5 to 25; that stretch reads IWILLIIVALFGGLVGGIFIA.

Belongs to the UPF0154 family.

The protein resides in the cell membrane. This is UPF0154 protein SAK_1616 from Streptococcus agalactiae serotype Ia (strain ATCC 27591 / A909 / CDC SS700).